Reading from the N-terminus, the 339-residue chain is Anthranilate phosphoribosyltransferase (339 aa).

5-phospho-alpha-D-ribose 1-diphosphate-binding positions include Gly-79, 82-83 (GD), Ser-87, 89-92 (NIST), 107-115 (KHGNRSISS), and Ser-119. Residue Gly-79 participates in anthranilate binding. Residue Ser-91 participates in Mg(2+) binding. Position 110 (Asn-110) interacts with anthranilate. Arg-165 provides a ligand contact to anthranilate. The Mg(2+) site is built by Asp-224 and Glu-225.

The protein belongs to the anthranilate phosphoribosyltransferase family. Homodimer. The cofactor is Mg(2+).

It catalyses the reaction N-(5-phospho-beta-D-ribosyl)anthranilate + diphosphate = 5-phospho-alpha-D-ribose 1-diphosphate + anthranilate. It functions in the pathway amino-acid biosynthesis; L-tryptophan biosynthesis; L-tryptophan from chorismate: step 2/5. Functionally, catalyzes the transfer of the phosphoribosyl group of 5-phosphorylribose-1-pyrophosphate (PRPP) to anthranilate to yield N-(5'-phosphoribosyl)-anthranilate (PRA). The polypeptide is Anthranilate phosphoribosyltransferase (Listeria welshimeri serovar 6b (strain ATCC 35897 / DSM 20650 / CCUG 15529 / CIP 8149 / NCTC 11857 / SLCC 5334 / V8)).